The chain runs to 148 residues: Urease accessory protein UreE (148 aa).

It belongs to the UreE family.

It localises to the cytoplasm. Its function is as follows. Involved in urease metallocenter assembly. Binds nickel. Probably functions as a nickel donor during metallocenter assembly. The protein is Urease accessory protein UreE of Bacillus sp. (strain TB-90).